Consider the following 131-residue polypeptide: D-ribose pyranase (131 aa).

The Proton donor role is filled by His-20. Substrate is bound by residues Asp-28, His-98, and 120 to 122; that span reads YAN.

This sequence belongs to the RbsD / FucU family. RbsD subfamily. As to quaternary structure, homodecamer.

Its subcellular location is the cytoplasm. The enzyme catalyses beta-D-ribopyranose = beta-D-ribofuranose. Its pathway is carbohydrate metabolism; D-ribose degradation; D-ribose 5-phosphate from beta-D-ribopyranose: step 1/2. Its function is as follows. Catalyzes the interconversion of beta-pyran and beta-furan forms of D-ribose. The sequence is that of D-ribose pyranase from Clostridium perfringens (strain ATCC 13124 / DSM 756 / JCM 1290 / NCIMB 6125 / NCTC 8237 / Type A).